A 106-amino-acid polypeptide reads, in one-letter code: Nucleoid-associated protein Smlt1015 (106 aa).

The tract at residues 81–106 is disordered; it reads IDAESKSKMGSATAGMQLPPGMKLPF.

Belongs to the YbaB/EbfC family. In terms of assembly, homodimer.

The protein resides in the cytoplasm. It localises to the nucleoid. Functionally, binds to DNA and alters its conformation. May be involved in regulation of gene expression, nucleoid organization and DNA protection. This chain is Nucleoid-associated protein Smlt1015, found in Stenotrophomonas maltophilia (strain K279a).